We begin with the raw amino-acid sequence, 71 residues long: Alpha-cobratoxin (71 aa).

Intrachain disulfides connect Cys3-Cys20, Cys14-Cys41, Cys26-Cys30, Cys45-Cys56, and Cys57-Cys62.

The protein belongs to the three-finger toxin family. Long-chain subfamily. Type II alpha-neurotoxin sub-subfamily. In terms of assembly, monomer, homo- or heterodimer with cytotoxins 1 (P60305), 2 (AC P01445), and 3 (AC P01446); disulfide-linked. In homodimer alpha-cobratoxin, selective reduction of Cys(26)-Cys(30) in one subunit does not affect the activity against the alpha-7/CHRNA7 nAChR, whereas its reduction in both subunits almost prevents alpha-7/CHRNA7 nAChR recognition. On the contrary, reduction of one or both Cys(26)-Cys(30) disulfide bonds in the homodimer considerably potentiates inhibition of the alpha-3-beta-2/CHRNA3-CHRNB2 nAChR by the toxin. Expressed by the venom gland.

The protein localises to the secreted. Monomer: binds with high affinity to muscular (alpha-1-beta-1-gamma-delta/CHRNA1-CHRNB1-CHRNG-CHRND) nAChR (tested on Torpedo californica, Kd=0.2-4.5 nM) and neuronal alpha-7/CHRNA7 nicotinic acetylcholine receptors (Kd=13-105 nM). Also inhibits GABA(A) channels. Heteropentamer targets studied are composed of alpha-1-beta-3-gamma-2 (GABRA1-GABRB3-GABRG2) subunits (IC(50)=236 nM), alpha-1-beta-2-gamma-2 (GABRA1-GABRB2-GABRG2) subunits (IC(50)=469 nM), alpha-2-beta-2-gamma-2 (GABRA2-GABRB2-GABRG2) subunits (IC(50)=485 nM), alpha-5-beta-3-gamma-2 (GABRA5-GABRB3-GABRG2) subunits (IC(50)=635 nM), and alpha-2-beta-3-gamma-2 (GABRA2-GABRB3-GABRG2) subunits (IC(50)=1099 nM) (activated by 10 uM GABA). Its function is as follows. Homodimer: binds with high affinity (but lower than the monomeric form) to muscular (IC(50)=9.7 nM) and with low affinity to neuronal alpha-7/CHRNA7 nAChRs (IC(50)=1370 nM). However, it acquires (compared to the monomeric form) the capacity to block alpha-3/beta-2 (CHRNA3/CHRNB2) nAChRs. Functionally, heterodimer with cytotoxin 3 (AC P01446): is slightly more active than the homodimer in inhibiting alpha-7/CHRNA7 nAChR and is considerably more active in blocking the alpha-3-beta-2/CHRNA3-CHRNB2 nAChR. This chain is Alpha-cobratoxin, found in Naja kaouthia (Monocled cobra).